A 111-amino-acid polypeptide reads, in one-letter code: Cell division protein FtsB (111 aa).

Residues 1–3 (MRL) are Cytoplasmic-facing. The chain crosses the membrane as a helical span at residues 4–21 (ITLFLLLLLLAIQYPLWL). Over 22-111 (GKGGWLRVWD…PAALQPNHRH (90 aa)) the chain is Periplasmic. A coiled-coil region spans residues 28 to 64 (RVWDMQKQVASQNQRNAELKQRNLKLEGEVKDLKEGT). A disordered region spans residues 90 to 111 (PAPKTSETPLPPPAALQPNHRH).

The protein belongs to the FtsB family. As to quaternary structure, part of a complex composed of FtsB, FtsL and FtsQ.

Its subcellular location is the cell inner membrane. Functionally, essential cell division protein. May link together the upstream cell division proteins, which are predominantly cytoplasmic, with the downstream cell division proteins, which are predominantly periplasmic. The chain is Cell division protein FtsB from Ralstonia nicotianae (strain ATCC BAA-1114 / GMI1000) (Ralstonia solanacearum).